A 332-amino-acid chain; its full sequence is DNA packaging protein (332 aa).

The segment at 1 to 207 (MDKSLFYNPQ…SERRKTRFGR (207 aa)) is ATPase. 24 to 31 (GARGIGKS) serves as a coordination point for ATP. The interval 233–332 (KRSKDSKFVF…YELFRKMRIQ (100 aa)) is DNA-binding.

Belongs to the phi29likevirus gp16 family. Homopentamer. Interacts with the packaging RNA (pRNA). Part of a DNA-gp3-gp16 complex.

It carries out the reaction ATP + H2O = ADP + phosphate + H(+). Functionally, ATPase required for the genome encapsidation reaction. Part of the active packaging motor via the binding to the packaging RNA (pRNA), itself fixed to the head-tail connector at the unique portal vertex of the prohead. Binds and supercoils the pre-formed, unit-length DNA bound to gp3 to produce an initiation complex for DNA packaging. Provides the energy to actively pump the viral DNA into the prohead. Approximately one molecule of ATP is used in the packaging of 2 bp of viral DNA. ATP hydrolysis results in a conformational change that causes the arginine/lysine finger of one subunit to move into the active site of its neighbor, where it interacts with the negatively charged oxygens on the gamma-phosphate of ATP. After packaging, the ATPase and the pRNA are released from the prohead. This is DNA packaging protein (16) from Bacillus phage phi29 (Bacteriophage phi-29).